Consider the following 427-residue polypeptide: MDKIVVQGGDNRLVGSVTIEGAKNAVLPLLAATILASEGKTVLQNVPILSDVFIMNQVVGGLNAKVDFDEEAHLVKVDATGDITEEAPYKYVSKMRASIVVLGPILARVGHAKVSMPGGCTIGSRPIDLHLKGLEAMGVKISQTAGYIEAKAERLHGAHIYMDFPSVGATQNLMMAATLADGVTVIENAAREPEIVDLAILLNEMGAKVKGAGTETITITGVEKLHGTTHNVVQDRIEAGTFMVAAAMTGGDVLIRDAVWEHNRPLIAKLLEMGVEVIEEDEGIRVRSQLENLKAVHVKTLPHPGFPTDMQAQFTALMTVAKGESTMVETVFENRFQHLEEMRRMGLHSEIIRDTARIVGGQPLQGAEVLSTDLRASAALILTGLVAQGETVVGKLVHLDRGYYGFHEKLAQLGAKIQRIEASDEDE.

23-24 (KN) contributes to the phosphoenolpyruvate binding site. Arg-96 is a binding site for UDP-N-acetyl-alpha-D-glucosamine. Residue Cys-120 is the Proton donor of the active site. Cys-120 is subject to 2-(S-cysteinyl)pyruvic acid O-phosphothioketal. Residues 125–129 (RPIDL), Asp-309, and Val-331 contribute to the UDP-N-acetyl-alpha-D-glucosamine site.

The protein belongs to the EPSP synthase family. MurA subfamily.

It localises to the cytoplasm. It carries out the reaction phosphoenolpyruvate + UDP-N-acetyl-alpha-D-glucosamine = UDP-N-acetyl-3-O-(1-carboxyvinyl)-alpha-D-glucosamine + phosphate. It participates in cell wall biogenesis; peptidoglycan biosynthesis. Its function is as follows. Cell wall formation. Adds enolpyruvyl to UDP-N-acetylglucosamine. This chain is UDP-N-acetylglucosamine 1-carboxyvinyltransferase 1, found in Streptococcus pneumoniae serotype 4 (strain ATCC BAA-334 / TIGR4).